Here is a 425-residue protein sequence, read N- to C-terminus: Adenylosuccinate synthetase (425 aa).

GTP is bound by residues 12–18 and 40–42; these read GDEGKGK and GHT. D13 functions as the Proton acceptor in the catalytic mechanism. Mg(2+)-binding residues include D13 and G40. Residues 13 to 16, 38 to 41, T130, R144, Q224, T239, and R301 contribute to the IMP site; these read DEGK and NAGH. The active-site Proton donor is the H41. 297 to 303 is a substrate binding site; sequence TVSNRRR. Residues R303, 329–331, and 411–413 each bind GTP; these read KLD and STS.

It belongs to the adenylosuccinate synthetase family. In terms of assembly, homodimer. Requires Mg(2+) as cofactor.

The protein localises to the cytoplasm. It carries out the reaction IMP + L-aspartate + GTP = N(6)-(1,2-dicarboxyethyl)-AMP + GDP + phosphate + 2 H(+). The protein operates within purine metabolism; AMP biosynthesis via de novo pathway; AMP from IMP: step 1/2. Its function is as follows. Plays an important role in the de novo pathway of purine nucleotide biosynthesis. Catalyzes the first committed step in the biosynthesis of AMP from IMP. This is Adenylosuccinate synthetase from Wolbachia sp. subsp. Drosophila simulans (strain wRi).